The chain runs to 642 residues: Threonine--tRNA ligase (642 aa).

The region spanning M1 to T61 is the TGS domain. Residues D243–P536 form a catalytic region. Positions 336, 387, and 513 each coordinate Zn(2+).

This sequence belongs to the class-II aminoacyl-tRNA synthetase family. In terms of assembly, homodimer. Zn(2+) serves as cofactor.

The protein localises to the cytoplasm. The enzyme catalyses tRNA(Thr) + L-threonine + ATP = L-threonyl-tRNA(Thr) + AMP + diphosphate + H(+). Catalyzes the attachment of threonine to tRNA(Thr) in a two-step reaction: L-threonine is first activated by ATP to form Thr-AMP and then transferred to the acceptor end of tRNA(Thr). Also edits incorrectly charged L-seryl-tRNA(Thr). This chain is Threonine--tRNA ligase, found in Granulibacter bethesdensis (strain ATCC BAA-1260 / CGDNIH1).